A 291-amino-acid chain; its full sequence is ATP synthase gamma chain (291 aa).

Belongs to the ATPase gamma chain family. As to quaternary structure, F-type ATPases have 2 components, CF(1) - the catalytic core - and CF(0) - the membrane proton channel. CF(1) has five subunits: alpha(3), beta(3), gamma(1), delta(1), epsilon(1). CF(0) has three main subunits: a, b and c.

It is found in the cell membrane. Its function is as follows. Produces ATP from ADP in the presence of a proton gradient across the membrane. The gamma chain is believed to be important in regulating ATPase activity and the flow of protons through the CF(0) complex. This chain is ATP synthase gamma chain, found in Buchnera aphidicola subsp. Baizongia pistaciae (strain Bp).